We begin with the raw amino-acid sequence, 84 residues long: Beta-defensin 119 (84 aa).

A signal peptide spans methionine 1–glycine 21. Intrachain disulfides connect cysteine 28-cysteine 55, cysteine 35-cysteine 49, and cysteine 39-cysteine 56.

It belongs to the beta-defensin family.

The protein localises to the secreted. In terms of biological role, has antibacterial activity. The chain is Beta-defensin 119 (DEFB119) from Hylobates lar (Lar gibbon).